A 318-amino-acid polypeptide reads, in one-letter code: HPr kinase/phosphorylase (318 aa).

Catalysis depends on residues H143 and K164. Position 158–165 (158–165) interacts with ATP; that stretch reads GKSGVGKS. S165 provides a ligand contact to Mg(2+). The Proton acceptor; for phosphorylation activity. Proton donor; for dephosphorylation activity role is filled by D182. The segment at 206-215 is important for the catalytic mechanism of both phosphorylation and dephosphorylation; the sequence is MEIRGLGILN. E207 is a Mg(2+) binding site. R248 is a catalytic residue. Positions 269 to 274 are important for the catalytic mechanism of dephosphorylation; sequence PVKPGR.

This sequence belongs to the HPrK/P family. Homohexamer. It depends on Mg(2+) as a cofactor.

The catalysed reaction is [HPr protein]-L-serine + ATP = [HPr protein]-O-phospho-L-serine + ADP + H(+). It catalyses the reaction [HPr protein]-O-phospho-L-serine + phosphate + H(+) = [HPr protein]-L-serine + diphosphate. Its function is as follows. Catalyzes the ATP- as well as the pyrophosphate-dependent phosphorylation of a specific serine residue in HPr, a phosphocarrier protein of the phosphoenolpyruvate-dependent sugar phosphotransferase system (PTS). HprK/P also catalyzes the pyrophosphate-producing, inorganic phosphate-dependent dephosphorylation (phosphorolysis) of seryl-phosphorylated HPr (P-Ser-HPr). This is HPr kinase/phosphorylase from Leptospira borgpetersenii serovar Hardjo-bovis (strain L550).